The chain runs to 726 residues: Catalase-peroxidase (726 aa).

Residues 1–13 show a composition bias toward polar residues; the sequence is MSMSEETNNSLSS. Residues 1–34 are disordered; the sequence is MSMSEETNNSLSSGKCPFHHGGSDQSAGEGTGSR. The segment at residues 105–226 is a cross-link (tryptophyl-tyrosyl-methioninium (Trp-Tyr) (with M-252)); that stretch reads WHGAGTYRSV…LAATEMGLIY (122 aa). Residue His106 is the Proton acceptor of the active site. Positions 226 to 252 form a cross-link, tryptophyl-tyrosyl-methioninium (Tyr-Met) (with W-105); it reads YVNPEGPNASGEPLSAAAAIRATFGNM. His267 is a heme b binding site.

The protein belongs to the peroxidase family. Peroxidase/catalase subfamily. Homodimer or homotetramer. Heme b serves as cofactor. In terms of processing, formation of the three residue Trp-Tyr-Met cross-link is important for the catalase, but not the peroxidase activity of the enzyme.

The catalysed reaction is H2O2 + AH2 = A + 2 H2O. The enzyme catalyses 2 H2O2 = O2 + 2 H2O. Bifunctional enzyme with both catalase and broad-spectrum peroxidase activity. This chain is Catalase-peroxidase, found in Enterobacter sp. (strain 638).